The chain runs to 647 residues: Macrolide export ATP-binding/permease protein MacB 2 (647 aa).

The ABC transporter domain maps to 6-244 (IQLKGIERRY…VTPTAAPAGK (239 aa)). 42–49 (GASGSGKS) provides a ligand contact to ATP. A disordered region spans residues 223 to 247 (QEDSGRKPAAVPVTPTAAPAGKEGV). Over residues 230–242 (PAAVPVTPTAAPA) the composition is skewed to low complexity. 4 consecutive transmembrane segments (helical) span residues 273 to 293 (FLTMLGIIIGIAAVVSVVALG), 527 to 547 (IAVISLIVGGVGVMNIMLVSV), 581 to 601 (LGGMLGVGVSLFIGLLFSLFV), and 610 to 630 (LFSILMAFGCSSLIGILFGYL).

Belongs to the ABC transporter superfamily. Macrolide exporter (TC 3.A.1.122) family. Homodimer. Part of the tripartite efflux system MacAB-TolC, which is composed of an inner membrane transporter, MacB, a periplasmic membrane fusion protein, MacA, and an outer membrane component, TolC. The complex forms a large protein conduit and can translocate molecules across both the inner and outer membranes. Interacts with MacA.

It localises to the cell inner membrane. In terms of biological role, part of the tripartite efflux system MacAB-TolC. MacB is a non-canonical ABC transporter that contains transmembrane domains (TMD), which form a pore in the inner membrane, and an ATP-binding domain (NBD), which is responsible for energy generation. Confers resistance against macrolides. This chain is Macrolide export ATP-binding/permease protein MacB 2, found in Aeromonas hydrophila subsp. hydrophila (strain ATCC 7966 / DSM 30187 / BCRC 13018 / CCUG 14551 / JCM 1027 / KCTC 2358 / NCIMB 9240 / NCTC 8049).